The chain runs to 124 residues: Ribonuclease pancreatic (124 aa).

The span at 1-13 (KETAAAKFERQHI) shows a compositional bias: basic and acidic residues. The tract at residues 1 to 24 (KETAAAKFERQHIDSNPSSVSSSN) is disordered. Substrate is bound by residues K7 and R10. Catalysis depends on H12, which acts as the Proton acceptor. Over residues 15–24 (SNPSSVSSSN) the composition is skewed to low complexity. Cystine bridges form between C26–C84, C40–C95, C58–C110, and C65–C72. N34 carries N-linked (GlcNAc...) asparagine; partial glycosylation. Residues 41–45 (KPVNT), K66, and R85 contribute to the substrate site. Catalysis depends on H119, which acts as the Proton donor.

The protein belongs to the pancreatic ribonuclease family. In terms of assembly, monomer. Interacts with and forms tight 1:1 complexes with RNH1. Dimerization of two such complexes may occur. Interaction with RNH1 inhibits this protein. As to expression, pancreas.

Its subcellular location is the secreted. The enzyme catalyses an [RNA] containing cytidine + H2O = an [RNA]-3'-cytidine-3'-phosphate + a 5'-hydroxy-ribonucleotide-3'-[RNA].. It carries out the reaction an [RNA] containing uridine + H2O = an [RNA]-3'-uridine-3'-phosphate + a 5'-hydroxy-ribonucleotide-3'-[RNA].. Endonuclease that catalyzes the cleavage of RNA on the 3' side of pyrimidine nucleotides. Acts on single-stranded and double-stranded RNA. This Antilocapra americana (Pronghorn) protein is Ribonuclease pancreatic (RNASE1).